The following is a 575-amino-acid chain: V-type ATP synthase alpha chain (575 aa).

238 to 245 (GPFGAGKT) serves as a coordination point for ATP.

It belongs to the ATPase alpha/beta chains family.

The enzyme catalyses ATP + H2O + 4 H(+)(in) = ADP + phosphate + 5 H(+)(out). Functionally, produces ATP from ADP in the presence of a proton gradient across the membrane. The V-type alpha chain is a catalytic subunit. This is V-type ATP synthase alpha chain from Borrelia garinii subsp. bavariensis (strain ATCC BAA-2496 / DSM 23469 / PBi) (Borreliella bavariensis).